A 1386-amino-acid polypeptide reads, in one-letter code: MACSIVQFCSFQDLQSARDFLFPQLREETPGALRRDPSKTSNWEDDSWGAWEETEPQEPEEEGNTSKTQKHSWLQECVLSLSPTSDLMVIAREQKAAFLVRKWKHSDKGKEEMQFAVGWSGSVSAEEGEYVTSALCIPLASQKRSSTGRPDWTCIVVGFTSGYVRFYTEGVLLLAQLLNEDRVLQLKCRTYEIPRHPGVTEQNEELSILYPAAIVTIDGFSLFQSLRACRNQVAKAAASGNENIQPPPLAYKKWGLQDIDTIIDHASIGIMTLSPFDQMKTASNIGGFNAAIKNSPPAMSQYITVGSSPFTGFFYALEGSTQPLLSHVALAVASKLTSALFSAASGWLGWKSKHEEETVQKQKPKMEPATPLAVRFGLPDSRRHGESICLSPCNTLAAVTDDFGRVILLDVARGIAIRMWKGYRDAQIGWIQIVEDLHERVPEKGDFSPFGNTQGPSRVAQFLVIYAPRRGILEVWSTQQGPRVGAFNVGKHCRLLYPGYKIMGLNNVTSQSWQPQTYQICLVDPVSASVKAVNVPFHLALSDKKSERAKDLHLVKKLAALLRAKSPRPDSFEAEIKELILDIKYPATKKQALESILASDRVSFSCLRNVTQTSMDTLKNQELESVDEGLLQFCASKLKLLHLYESVSQLNTLDFHSDTPFSDNDLAVLLRLDDKELLKLRALLEKYKQENTKATVRFSEDADGVLPVKTFLEYLDYEKDALSIRKTSEEECVALGSFFFWKCLHGESSTEDMCHTLESAGLSPQQLLSLLLSVWLSKEKDILDKPQSVCCLHTMLSLLSKMKVAIDETWDSQSVSPWWQQMRMACIQSENNGAALLSAHVGHSVAAQMSSSATDKKFSQMVLDADAEALTDSWEALSLDTEYWKLLLRQLEDCLILQTLLHSRASPPAAKASSPQTEPLPRLSVKKLLEGGKGGIADSVAKWIFKQDLSPELLKCANREKDVENPDEPREGIARSPPEVSEVETDLGAVPDLLRLAYEQFPCSLELDVLHAHCCWEYVVQWNKDPEEARFLVRSIEHLRHILNPHVQNGISLMMWNTFLVKRFSAATYLMDKVGKSPKDRLCRRDVGMSDTALTSFLGSCLDLLQTSLEADISRDEVQVPVLDTEDAWLSVEGPTSIVELALEQKPIHYPLVEHHSILCSILYAAMSFSLKSVKPLALFDSKGKNAFFKDLTSIQLLPSGEMDPNFISVRQQFLLKVVSAAVQAQHSKDKDPSARAADTHGQDLNWTALAVDLAHHLQVSEDVIRRHYVGELYSYGADLLGEEAILQVQDKEVLASQLLVLTGQRLAHALFHTQTKEGMELLARLPPTLCTWLKAMNPQDLQNTGVPVAATAKLVHKVMELLPEKHGQYSLALHLIEAVEAMATL.

A disordered region spans residues 31–69 (GALRRDPSKTSNWEDDSWGAWEETEPQEPEEEGNTSKTQ). The residue at position 38 (Ser-38) is a Phosphoserine. Over residues 43–63 (WEDDSWGAWEETEPQEPEEEG) the composition is skewed to acidic residues. Position 448 is a phosphoserine (Ser-448). Thr-899 is modified (phosphothreonine). Position 914 is a phosphoserine (Ser-914). Over residues 959-973 (REKDVENPDEPREGI) the composition is skewed to basic and acidic residues. The tract at residues 959–982 (REKDVENPDEPREGIARSPPEVSE) is disordered. Ser-976 is subject to Phosphoserine.

The protein belongs to the Rab3-GAP regulatory subunit family. As to quaternary structure, the Rab3 GTPase-activating complex is a heterodimer composed of Rab3gap1 and Rab3gap2. The Rab3 GTPase-activating complex interacts with DMXL2. Interacts with LMAN1.

It localises to the cytoplasm. The protein resides in the endoplasmic reticulum. Functionally, regulatory subunit of the Rab3 GTPase-activating (Rab3GAP) complex composed of RAB3GAP1 and RAB3GAP2, which has GTPase-activating protein (GAP) activity towards various Rab3 subfamily members (RAB3A, RAB3B, RAB3C and RAB3D), RAB5A and RAB43, and guanine nucleotide exchange factor (GEF) activity towards RAB18. As part of the Rab3GAP complex, acts as a GAP for Rab3 proteins by converting active RAB3-GTP to the inactive form RAB3-GDP. Rab3 proteins are involved in regulated exocytosis of neurotransmitters and hormones. The Rab3GAP complex acts as a GEF for RAB18 by promoting the conversion of inactive RAB18-GDP to the active form RAB18-GTP. Recruits and stabilizes RAB18 at the cis-Golgi membrane in fibroblasts where RAB18 is most likely activated. Also involved in RAB18 recruitment at the endoplasmic reticulum (ER) membrane where it maintains proper ER structure. Required for normal eye and brain development. May participate in neurodevelopmental processes such as proliferation, migration and differentiation before synapse formation, and non-synaptic vesicular release of neurotransmitters. This is Rab3 GTPase-activating protein non-catalytic subunit from Rattus norvegicus (Rat).